The chain runs to 629 residues: tRNA uridine 5-carboxymethylaminomethyl modification enzyme MnmG (629 aa).

FAD-binding positions include 13 to 18 (GGGHAG), V125, and S180. 273 to 287 (GPRYCPSIEDKVMRF) provides a ligand contact to NAD(+). Q370 contributes to the FAD binding site.

This sequence belongs to the MnmG family. In terms of assembly, homodimer. Heterotetramer of two MnmE and two MnmG subunits. FAD is required as a cofactor.

The protein localises to the cytoplasm. Functionally, NAD-binding protein involved in the addition of a carboxymethylaminomethyl (cmnm) group at the wobble position (U34) of certain tRNAs, forming tRNA-cmnm(5)s(2)U34. This chain is tRNA uridine 5-carboxymethylaminomethyl modification enzyme MnmG, found in Shigella sonnei (strain Ss046).